The following is a 125-amino-acid chain: uncharacterized protein (125 aa).

Residues 1–21 (MIRNIIITISAILLLTSKGFA) form the signal peptide. Residues 54-102 (KPEIREEIQKYRVEIVNINKKKRELYDKLSKEAQNFLAKEQEYKQRLSS) adopt a coiled-coil conformation. The tract at residues 96–125 (YKQRLSSSSMATEDSKDNNTAKDNKDADKK) is disordered. Residues 108-125 (EDSKDNNTAKDNKDADKK) are compositionally biased toward basic and acidic residues.

This is an uncharacterized protein from Rickettsia bellii (strain RML369-C).